The following is a 651-amino-acid chain: PTS system N-acetylglucosamine-specific EIICBA component (651 aa).

Positions 1 to 371 constitute a PTS EIIC type-1 domain; it reads MNILGFFQRL…FNLKTPGRED (371 aa). Transmembrane regions (helical) follow at residues 16–36, 40–60, 70–90, 92–112, 132–152, 165–185, 192–212, 232–252, 264–284, 285–305, 308–328, and 339–359; these read LPIA…PDLL, FIAQ…AIGV, GSAA…MVTI, PEIN…GAVY, FVPI…GYVW, WIVS…RLLI, VLNT…GTVF, GFFP…YLAA, LLSV…EFLF, LFLA…SLFI, ALGI…VLMY, and MLLV…SAVI. One can recognise a PTS EIIB type-1 domain in the interval 390 to 472; that stretch reads TQLATSYIAA…KKVVTRGPVA (83 aa). Catalysis depends on C412, which acts as the Phosphocysteine intermediate; for EIIB activity. C412 carries the phosphocysteine; by EIIA modification. The PTS EIIA type-1 domain occupies 519 to 623; sequence DEAFASKAVG…SMISPVVCSN (105 aa). H556 and H571 together coordinate Zn(2+). H571 acts as the Tele-phosphohistidine intermediate; for EIIA activity in catalysis. A Phosphohistidine; by HPr modification is found at H571.

The cofactor is Zn(2+).

It localises to the cell inner membrane. The enzyme catalyses N(pros)-phospho-L-histidyl-[protein] + N-acetyl-D-glucosamine(out) = N-acetyl-D-glucosamine 6-phosphate(in) + L-histidyl-[protein]. In terms of biological role, the phosphoenolpyruvate-dependent sugar phosphotransferase system (sugar PTS), a major carbohydrate active transport system, catalyzes the phosphorylation of incoming sugar substrates concomitantly with their translocation across the cell membrane. This system is involved in N-acetylglucosamine transport. In Klebsiella pneumoniae, this protein is PTS system N-acetylglucosamine-specific EIICBA component (nagE).